A 198-amino-acid chain; its full sequence is Carnitine operon protein CaiE (198 aa).

The tract at residues 174–198 (KPLTQAEENRPRLKGTTDVKPKSAQ) is disordered. Over residues 180–198 (EENRPRLKGTTDVKPKSAQ) the composition is skewed to basic and acidic residues.

The protein belongs to the transferase hexapeptide repeat family.

The protein operates within amine and polyamine metabolism; carnitine metabolism. Its function is as follows. Overproduction of CaiE stimulates the activity of CaiB and CaiD. The sequence is that of Carnitine operon protein CaiE from Salmonella dublin (strain CT_02021853).